The following is a 607-amino-acid chain: Matrix metalloproteinase-16 (607 aa).

The first 31 residues, 1 to 31 (MILLAFSSGRRLDFVHRSGVFFLQTLLWILC), serve as a signal peptide directing secretion. Positions 32–119 (ATVCGTEQYF…SSKFNIRRKR (88 aa)) are excised as a propeptide. Asn83 carries an N-linked (GlcNAc...) asparagine glycan. A Cysteine switch motif is present at residues 99 to 106 (PRCGVPDQ). Residue Cys101 coordinates Zn(2+). Residues 120-564 (YALTGQKWQH…LDNTASTVKA (445 aa)) lie on the Extracellular side of the membrane. Asp183 lines the Ca(2+) pocket. Zn(2+) contacts are provided by His193 and Asp195. Positions 200, 201, 203, and 205 each coordinate Ca(2+). His208 contributes to the Zn(2+) binding site. Residues Gly215, Gly217, and Asp219 each coordinate Ca(2+). His221 lines the Zn(2+) pocket. Residues Asp223 and Glu226 each coordinate Ca(2+). Position 246 (His246) interacts with Zn(2+). Glu247 is a catalytic residue. 2 residues coordinate Zn(2+): His250 and His256. Residues 281-340 (DDLQGIQKIYGPPDKIPPPTRPLPTVPPHRSVPPADPRRHDRPKPPRPPTGRPSYPGAKP) are disordered. Over residues 294–315 (DKIPPPTRPLPTVPPHRSVPPA) the composition is skewed to pro residues. 4 Hemopexin repeats span residues 340-388 (PNIC…WRGL), 389-434 (PPSI…GNGI), 436-484 (PHGI…KGIP), and 485-532 (ESPQ…FMGC). Cys343 and Cys532 are oxidised to a cystine. The helical transmembrane segment at 565-585 (IAIVIPCILALCLLVLVYTVF) threads the bilayer. Topologically, residues 586–607 (QFKRKGTPRHILYCKRSMQEWV) are cytoplasmic.

It belongs to the peptidase M10A family. Interacts with CSPG4 through CSPG4 chondroitin sulfate glycosaminoglycan. Requires Zn(2+) as cofactor. Ca(2+) is required as a cofactor. Post-translationally, the precursor is cleaved by a furin endopeptidase.

The protein resides in the cell membrane. Its function is as follows. Endopeptidase that degrades various components of the extracellular matrix, such as collagen type III and fibronectin. Activates progelatinase A. Involved in the matrix remodeling of blood vessels. It has no effect on type I, II, IV and V collagen. However, upon interaction with CSPG4, it may be involved in degradation and invasion of type I collagen by melanoma cells. This chain is Matrix metalloproteinase-16 (Mmp16), found in Mus musculus (Mouse).